We begin with the raw amino-acid sequence, 272 residues long: Dihydropteroate synthase (272 aa).

The 256-residue stretch at 1–256 folds into the Pterin-binding domain; it reads MIKTKIMGIL…NVLLNTRLAQ (256 aa). Residue asparagine 11 coordinates Mg(2+). (7,8-dihydropterin-6-yl)methyl diphosphate is bound by residues threonine 51, aspartate 89, asparagine 108, aspartate 172, lysine 208, and 244 to 246; that span reads RVH.

This sequence belongs to the DHPS family. As to quaternary structure, homodimer. Mg(2+) serves as cofactor.

It carries out the reaction (7,8-dihydropterin-6-yl)methyl diphosphate + 4-aminobenzoate = 7,8-dihydropteroate + diphosphate. Its pathway is cofactor biosynthesis; tetrahydrofolate biosynthesis; 7,8-dihydrofolate from 2-amino-4-hydroxy-6-hydroxymethyl-7,8-dihydropteridine diphosphate and 4-aminobenzoate: step 1/2. Catalyzes the condensation of para-aminobenzoate (pABA) with 6-hydroxymethyl-7,8-dihydropterin diphosphate (DHPt-PP) to form 7,8-dihydropteroate (H2Pte), the immediate precursor of folate derivatives. In Staphylococcus epidermidis (strain ATCC 12228 / FDA PCI 1200), this protein is Dihydropteroate synthase (folP).